The following is a 345-amino-acid chain: N-acetyl-gamma-glutamyl-phosphate reductase (345 aa).

Cysteine 149 is a catalytic residue.

The protein belongs to the NAGSA dehydrogenase family. Type 1 subfamily.

Its subcellular location is the cytoplasm. The enzyme catalyses N-acetyl-L-glutamate 5-semialdehyde + phosphate + NADP(+) = N-acetyl-L-glutamyl 5-phosphate + NADPH + H(+). It participates in amino-acid biosynthesis; L-arginine biosynthesis; N(2)-acetyl-L-ornithine from L-glutamate: step 3/4. Functionally, catalyzes the NADPH-dependent reduction of N-acetyl-5-glutamyl phosphate to yield N-acetyl-L-glutamate 5-semialdehyde. The protein is N-acetyl-gamma-glutamyl-phosphate reductase of Janthinobacterium sp. (strain Marseille) (Minibacterium massiliensis).